A 672-amino-acid polypeptide reads, in one-letter code: Glycerophosphocholine phosphodiesterase GPCPD1 (672 aa).

Residues 1-113 (MTPSQVTFEI…IIIDDGQFGI (113 aa)) form the CBM20 domain. Residues R68 and 86–87 (HK) each bind substrate. S175 bears the Phosphoserine mark. The GP-PDE domain occupies 318–618 (PLDVGHRGAG…DRIYDWMPEQ (301 aa)). Y608 carries the post-translational modification Phosphotyrosine.

Belongs to the glycerophosphoryl diester phosphodiesterase family.

It localises to the cytoplasm. It is found in the cytosol. It carries out the reaction sn-glycerol 3-phosphocholine + H2O = sn-glycerol 3-phosphate + choline + H(+). Functionally, may be involved in the negative regulation of skeletal muscle differentiation, independently of its glycerophosphocholine phosphodiesterase activity. This is Glycerophosphocholine phosphodiesterase GPCPD1 (Gpcpd1) from Rattus norvegicus (Rat).